The primary structure comprises 343 residues: Sorbitol dehydrogenase (343 aa).

The segment at 1–26 (MKALVKTQHGTGHFAVQEKPEPTPGK) is disordered. Positions 39, 60, and 61 each coordinate Zn(2+). Glu146 is a binding site for substrate. NAD(+) is bound by residues Ile174, Arg200, and 262 to 264 (VGL).

This sequence belongs to the zinc-containing alcohol dehydrogenase family. As to quaternary structure, homotetramer. Zn(2+) is required as a cofactor.

The enzyme catalyses keto-D-fructose + NADH + H(+) = D-sorbitol + NAD(+). The catalysed reaction is xylitol + NAD(+) = D-xylulose + NADH + H(+). It catalyses the reaction L-iditol + NAD(+) = keto-L-sorbose + NADH + H(+). Functionally, polyol dehydrogenase that catalyzes the NAD(+)-dependent oxidation of various sugar alcohols. Is active with D-sorbitol (D-glucitol), xylitol and L-iditol as substrates, leading to the C2-oxidized products D-fructose, D-xylulose and L-sorbose, respectively. This chain is Sorbitol dehydrogenase (gutB), found in Halalkalibacterium halodurans (strain ATCC BAA-125 / DSM 18197 / FERM 7344 / JCM 9153 / C-125) (Bacillus halodurans).